A 39-amino-acid polypeptide reads, in one-letter code: Phosphatase RapI inhibitor (39 aa).

A propeptide spanning residues 1 to 34 (MKISRILLAAVILSSVFSITYLQSDHNTEIKVAA) is cleaved from the precursor.

It belongs to the Phr family. In terms of processing, contains a predicted signal peptide cleavage site in the N-terminal region, however the propeptide is probably subject to only one processing event, at the N-terminal end of the mature peptide.

The protein localises to the secreted. It localises to the cytoplasm. Intercellular signaling molecule that inhibits excision of the mobile genetic element ICEBs1 when cells are crowded by cells that contain ICEBs1 and produce the PhrI peptide. Secreted during production, but the mature peptide acts intracellularly, indicating that it needs to be imported into the cell to function. Acts by inhibiting RapI activity. In Bacillus subtilis (strain 168), this protein is Phosphatase RapI inhibitor (phrI).